The following is a 454-amino-acid chain: V-type ATP synthase subunit I 2 (454 aa).

The segment at 101–121 is disordered; sequence EREGDAPSVPRGKSSVAHDSA. The next 4 helical transmembrane spans lie at 254-274, 293-313, 351-371, and 424-444; these read LLFG…VLGL, VFLS…EFFA, MAFF…GLII, and ACLS…SVCV.

The protein belongs to the V-ATPase 116 kDa subunit family.

It is found in the cell membrane. Produces ATP from ADP in the presence of a proton gradient across the membrane. This chain is V-type ATP synthase subunit I 2 (atpI2), found in Treponema pallidum (strain Nichols).